Reading from the N-terminus, the 261-residue chain is Monopolin complex subunit pcs1 (261 aa).

The interval 1 to 42 is disordered; that stretch reads MRKNNMQTSKDSELKEQAKGKSSKLIHKLPKQRTRISQGQMH. Positions 10–19 are enriched in basic and acidic residues; that stretch reads KDSELKEQAK. Basic residues predominate over residues 21–34; that stretch reads KSSKLIHKLPKQRT. A coiled-coil region spans residues 91–170; sequence HTQEQEFNEL…EQIKNYSKIN (80 aa).

In terms of assembly, component of a monopolin-like complex composed of pcs1 and mde4. The complex associates with the kinetochore.

It is found in the nucleus. The protein resides in the nucleolus. The protein localises to the chromosome. Its subcellular location is the centromere. In terms of biological role, the monopolin-like pcs1/mde4 complex is essential for accurate chromosome segregation during mitosis and meiosis II. May clamp together microtubule binding sites on the same kinetochore, preventing merotelic attachment of microtubules. In contrast to its S.cerevisiae ortholog CSM1, is not required ofr mono-orientation during meiosis I. The sequence is that of Monopolin complex subunit pcs1 (pcs1) from Schizosaccharomyces pombe (strain 972 / ATCC 24843) (Fission yeast).